A 473-amino-acid chain; its full sequence is Trehalose-6-phosphate synthase (473 aa).

Position 10 (R10) interacts with D-glucose 6-phosphate. Position 21–22 (21–22 (GG)) interacts with UDP-alpha-D-glucose. Y76 and D130 together coordinate D-glucose 6-phosphate. Residues R262 and K267 each coordinate UDP-alpha-D-glucose. Residue R300 participates in D-glucose 6-phosphate binding. UDP-alpha-D-glucose is bound by residues F339 and 365 to 369 (LVAKE). The segment at 454–473 (TPRSPERQQQNNVATFPKLA) is disordered.

Belongs to the glycosyltransferase 20 family. Homotetramer.

It carries out the reaction D-glucose 6-phosphate + UDP-alpha-D-glucose = alpha,alpha-trehalose 6-phosphate + UDP + H(+). It participates in glycan biosynthesis; trehalose biosynthesis. Its function is as follows. Probably involved in the osmoprotection via the biosynthesis of trehalose. Catalyzes the transfer of glucose from UDP-alpha-D-glucose (UDP-Glc) to D-glucose 6-phosphate (Glc-6-P) to form trehalose-6-phosphate. Acts with retention of the anomeric configuration of the UDP-sugar donor. The polypeptide is Trehalose-6-phosphate synthase (Salmonella paratyphi A (strain ATCC 9150 / SARB42)).